The following is a 428-amino-acid chain: Histone deacetylase 3 (428 aa).

Positions 3-316 (KTVAYFYDPD…WTYETSLLVD (314 aa)) are histone deacetylase. 3 residues coordinate 1D-myo-inositol 1,4,5,6-tetrakisphosphate: H17, G21, and K25. The active site involves H135. Positions 170, 172, and 259 each coordinate Zn(2+). R265 is a 1D-myo-inositol 1,4,5,6-tetrakisphosphate binding site. The disordered stretch occupies residues 385 to 428 (LSYDRTDEPDPEERGSEENYSRPEAANEFYDGDHDNDKESDVEI). Composition is skewed to basic and acidic residues over residues 386–405 (SYDR…ENYS) and 415–428 (DGDH…DVEI).

The protein belongs to the histone deacetylase family. HD type 1 subfamily.

Its subcellular location is the nucleus. It is found in the chromosome. It localises to the cytoplasm. The protein resides in the cytosol. The catalysed reaction is N(6)-acetyl-L-lysyl-[histone] + H2O = L-lysyl-[histone] + acetate. It catalyses the reaction N(6)-acetyl-L-lysyl-[protein] + H2O = L-lysyl-[protein] + acetate. The enzyme catalyses N(6)-(2E)-butenoyl-L-lysyl-[protein] + H2O = (2E)-2-butenoate + L-lysyl-[protein]. It carries out the reaction N(6)-(2-hydroxyisobutanoyl)-L-lysyl-[protein] + H2O = 2-hydroxy-2-methylpropanoate + L-lysyl-[protein]. The catalysed reaction is N(6)-[(S)-lactoyl]-L-lysyl-[protein] + H2O = (S)-lactate + L-lysyl-[protein]. With respect to regulation, inositol tetraphosphate (1D-myo-inositol 1,4,5,6-tetrakisphosphate) promotes the histone deacetylase activity by acting as an intermolecular glue between HDAC3 and N-Cor repressor complex components. Its function is as follows. Histone deacetylase that catalyzes the deacetylation of lysine residues on the N-terminal part of the core histones (H2A, H2B, H3 and H4), and some other non-histone substrates. Histone deacetylation gives a tag for epigenetic repression and plays an important role in transcriptional regulation, cell cycle progression and developmental events. Histone deacetylases act via the formation of large multiprotein complexes, such as N-Cor repressor complex, which activate the histone deacetylase activity. Participates in the BCL6 transcriptional repressor activity by deacetylating the H3 'Lys-27' (H3K27) on enhancer elements, antagonizing EP300 acetyltransferase activity and repressing proximal gene expression. Also functions as a deacetylase for non-histone targets. In addition to protein deacetylase activity, also acts as a protein-lysine deacylase by recognizing other acyl groups: catalyzes removal of (2E)-butenoyl (crotonyl), lactoyl (lactyl) and 2-hydroxyisobutanoyl (2-hydroxyisobutyryl) acyl groups from lysine residues, leading to protein decrotonylation, delactylation and de-2-hydroxyisobutyrylation, respectively. This Gallus gallus (Chicken) protein is Histone deacetylase 3 (HDAC3).